The chain runs to 172 residues: Protein GrpE (172 aa).

The interval 1–24 is disordered; the sequence is MNQDHPEFDSEDLAQNPPETDPLK.

This sequence belongs to the GrpE family. Homodimer.

It localises to the cytoplasm. Participates actively in the response to hyperosmotic and heat shock by preventing the aggregation of stress-denatured proteins, in association with DnaK and GrpE. It is the nucleotide exchange factor for DnaK and may function as a thermosensor. Unfolded proteins bind initially to DnaJ; upon interaction with the DnaJ-bound protein, DnaK hydrolyzes its bound ATP, resulting in the formation of a stable complex. GrpE releases ADP from DnaK; ATP binding to DnaK triggers the release of the substrate protein, thus completing the reaction cycle. Several rounds of ATP-dependent interactions between DnaJ, DnaK and GrpE are required for fully efficient folding. This is Protein GrpE from Xanthomonas oryzae pv. oryzae (strain PXO99A).